We begin with the raw amino-acid sequence, 131 residues long: ATP synthase epsilon chain (131 aa).

It belongs to the ATPase epsilon chain family. As to quaternary structure, F-type ATPases have 2 components, CF(1) - the catalytic core - and CF(0) - the membrane proton channel. CF(1) has five subunits: alpha(3), beta(3), gamma(1), delta(1), epsilon(1). CF(0) has three main subunits: a, b and c.

It localises to the cell membrane. Its function is as follows. Produces ATP from ADP in the presence of a proton gradient across the membrane. This is ATP synthase epsilon chain from Bacillus pumilus (strain SAFR-032).